The following is a 106-amino-acid chain: Transcription factor TRY (106 aa).

Positions 34–71 (TEQEEDLIFRMYRLVGDRWDLIAGRVPGRQPEEIERYW) constitute a Myb-like domain. The disordered stretch occupies residues 83–106 (RRQLHSSSHKHTKPHRPRFSIYPS). Positions 84–100 (RQLHSSSHKHTKPHRPR) are enriched in basic residues.

As to quaternary structure, interacts with GL3 and thus prevents GL1 GL3 interaction. Also interacts with BHLH2. As to expression, expressed in roots, leaves, siliques and inflorescences.

The protein resides in the nucleus. Functionally, transcription factor. Involved in epidermal cell fate specification. Negative regulator of trichome development, including endoreplication, by lateral inhibition involving intercellular interactions. Promotes the formation of hair developing cells (trichoblasts) in H position in root epidermis, probably by inhibiting non-hair cell (atrichoblasts) formation. The sequence is that of Transcription factor TRY (TRY) from Arabidopsis thaliana (Mouse-ear cress).